We begin with the raw amino-acid sequence, 148 residues long: Large ribosomal subunit protein bL9 (148 aa).

The protein belongs to the bacterial ribosomal protein bL9 family.

In terms of biological role, binds to the 23S rRNA. The polypeptide is Large ribosomal subunit protein bL9 (Methylococcus capsulatus (strain ATCC 33009 / NCIMB 11132 / Bath)).